An 816-amino-acid chain; its full sequence is Phosphatidylinositol 4-kinase beta (816 aa).

Disordered regions lie at residues 1–30, 99–120, and 248–318; these read MGDTVVEPAPLKPTSEPTSGPPGNNGGSLL, EEEDEMGASVASGTAKGARRRR, and AHRK…SFSS. Gly2 is subject to N-acetylglycine. Positions 2-68 are interaction with ACBD3; sequence GDTVVEPAPL…VKLLHGGVAV (67 aa). The 191-residue stretch at 52–242 folds into the PIK helical domain; that stretch reads CQDVLEKVKL…GTKLRKLILS (191 aa). Ser258 is subject to Phosphoserine. At Thr263 the chain carries Phosphothreonine. Residues Ser266, Ser275, Ser277, Ser284, and Ser294 each carry the phosphoserine modification. Composition is skewed to polar residues over residues 278-297 and 306-318; these read DATASISLSSNLKRTASNPK and SSSTESIDNSFSS. The residue at position 428 (Ser428) is a Phosphoserine. Thr438 is modified (phosphothreonine). Ser511 is modified (phosphoserine). 2 positions are modified to phosphothreonine: Thr517 and Thr519. The 267-residue stretch at 535–801 folds into the PI3K/PI4K catalytic domain; it reads EPWQEKVRRI…MVDGSMRSIT (267 aa). A G-loop region spans residues 541-547; that stretch reads VRRIREG. A catalytic loop region spans residues 668–676; sequence QVKDRHNGN. Residues 687 to 711 form an activation loop region; sequence HIDFGFILSSSPRNLGFETSAFKLT.

This sequence belongs to the PI3/PI4-kinase family. Type III PI4K subfamily. In terms of assembly, interacts with ARF1 and ARF3 in the Golgi complex, but not with ARF4, ARF5 or ARF6. Interacts with NCS1/FREQ in a calcium-independent manner. Interacts with CALN1/CABP8 and CALN2/CABP7; in a calcium-dependent manner; this interaction competes with NCS1/FREQ binding. Interacts with ACBD3. Interacts with ARMH3, YWHAB, YWHAE, YWHAG, YWHAH, YWHAQ, YWHAZ and SFN. Interacts with GGA2 (via VHS domain); the interaction is important for PI4KB location at the Golgi apparatus membrane. Interacts with ATG9A. It depends on Mg(2+) as a cofactor. The cofactor is Mn(2+).

It localises to the endomembrane system. The protein localises to the mitochondrion outer membrane. The protein resides in the rough endoplasmic reticulum membrane. It is found in the golgi apparatus. Its subcellular location is the golgi apparatus membrane. The catalysed reaction is a 1,2-diacyl-sn-glycero-3-phospho-(1D-myo-inositol) + ATP = a 1,2-diacyl-sn-glycero-3-phospho-(1D-myo-inositol 4-phosphate) + ADP + H(+). With respect to regulation, inhibited by wortmannin. Increased kinase activity upon interaction with NCS1/FREQ. Its function is as follows. Phosphorylates phosphatidylinositol (PI) in the first committed step in the production of the second messenger inositol-1,4,5,-trisphosphate (PIP). May regulate Golgi disintegration/reorganization during mitosis, possibly via its phosphorylation. Involved in Golgi-to-plasma membrane trafficking. This chain is Phosphatidylinositol 4-kinase beta (PI4KB), found in Callithrix jacchus (White-tufted-ear marmoset).